The following is a 430-amino-acid chain: Glial fibrillary acidic protein (430 aa).

Positions 1–31 are disordered; sequence MERRRITSARRSYASSETMVRGHGPTRHLGT. A head region spans residues 1-70; it reads MERRRITSAR…KETRASERAE (70 aa). The residue at position 7 (threonine 7) is a Phosphothreonine; by AURKB and ROCK1. The segment covering 9 to 18 has biased composition (polar residues); it reads ARRSYASSET. Residue arginine 11 is modified to Omega-N-methylarginine. Serine 12 bears the Phosphoserine mark. An Omega-N-methylarginine modification is found at arginine 21. Arginine 34 bears the Citrulline mark. Serine 36 is subject to Phosphoserine; by AURKB and ROCK1. Residue threonine 41 is modified to Phosphothreonine. The 309-residue stretch at 67 to 375 folds into the IF rod domain; that stretch reads ERAEMMELND…KLLEGEENRI (309 aa). The interval 71-102 is coil 1A; that stretch reads MMELNDRFASYIEKVRFLEQQNKALAAELNQL. Position 80 is a phosphoserine (serine 80). The segment at 103 to 113 is linker 1; the sequence is RAKEPTKLADV. Phosphothreonine occurs at positions 108 and 148. The coil 1B stretch occupies residues 114–212; it reads YQAELRELRL…EEEVRELQEQ (99 aa). Residues 213–228 form a linker 12 region; it reads LAQQQVHVEMDVAKPD. The coil 2A stretch occupies residues 229 to 250; sequence LTAALREIRTQYEAVATSNMQE. The tract at residues 251-254 is linker 2; the sequence is TEEW. Residues 255 to 375 form a coil 2B region; the sequence is YRSKFADLTD…KLLEGEENRI (121 aa). Serine 267 is modified (phosphoserine). Citrulline is present on arginine 268. Serine 321 bears the Phosphoserine mark. Positions 376 to 430 are tail; it reads TIPVQTFSNLQIRETSLDTKSVSEGHLKRNIVVKTVEMRDGEVIKESKQEHKDVM. At threonine 381 the chain carries Phosphothreonine. Serine 383 is modified (phosphoserine). Residues arginine 404 and arginine 414 each carry the citrulline modification.

This sequence belongs to the intermediate filament family. As to quaternary structure, interacts with SYNM. Interacts with PSEN1 (via N-terminus). In terms of processing, phosphorylated by PKN1. As to expression, expressed in the cortex and hippocampus. Expression decreases following acute and chronic corticosterone treatment.

The protein localises to the cytoplasm. GFAP, a class-III intermediate filament, is a cell-specific marker that, during the development of the central nervous system, distinguishes astrocytes from other glial cells. In Rattus norvegicus (Rat), this protein is Glial fibrillary acidic protein (Gfap).